A 464-amino-acid polypeptide reads, in one-letter code: Glutamate--tRNA ligase (464 aa).

The 'HIGH' region signature appears at 9–19; sequence PSPTGYLHIGG. The 'KMSKS' region signature appears at 242-246; that stretch reads KISKR. Residue lysine 245 coordinates ATP.

Belongs to the class-I aminoacyl-tRNA synthetase family. Glutamate--tRNA ligase type 1 subfamily. Monomer.

The protein localises to the cytoplasm. The enzyme catalyses tRNA(Glu) + L-glutamate + ATP = L-glutamyl-tRNA(Glu) + AMP + diphosphate. In terms of biological role, catalyzes the attachment of glutamate to tRNA(Glu) in a two-step reaction: glutamate is first activated by ATP to form Glu-AMP and then transferred to the acceptor end of tRNA(Glu). This chain is Glutamate--tRNA ligase, found in Neisseria meningitidis serogroup C / serotype 2a (strain ATCC 700532 / DSM 15464 / FAM18).